We begin with the raw amino-acid sequence, 71 residues long: Beta-defensin 124 (71 aa).

Residues 1–22 form the signal peptide; it reads MTQLLLFLVALLVLGHVPSGRS. 3 disulfides stabilise this stretch: cysteine 27-cysteine 54, cysteine 34-cysteine 48, and cysteine 38-cysteine 55.

This sequence belongs to the beta-defensin family.

The protein resides in the secreted. In terms of biological role, has antibacterial activity. This Pan troglodytes (Chimpanzee) protein is Beta-defensin 124 (DEFB124).